Consider the following 441-residue polypeptide: 4-hydroxy-3-methylbut-2-en-1-yl diphosphate synthase (flavodoxin) (441 aa).

4 residues coordinate [4Fe-4S] cluster: C320, C323, C366, and E373.

The protein belongs to the IspG family. The cofactor is [4Fe-4S] cluster.

The catalysed reaction is (2E)-4-hydroxy-3-methylbut-2-enyl diphosphate + oxidized [flavodoxin] + H2O + 2 H(+) = 2-C-methyl-D-erythritol 2,4-cyclic diphosphate + reduced [flavodoxin]. Its pathway is isoprenoid biosynthesis; isopentenyl diphosphate biosynthesis via DXP pathway; isopentenyl diphosphate from 1-deoxy-D-xylulose 5-phosphate: step 5/6. Functionally, converts 2C-methyl-D-erythritol 2,4-cyclodiphosphate (ME-2,4cPP) into 1-hydroxy-2-methyl-2-(E)-butenyl 4-diphosphate. This Rhodopseudomonas palustris (strain ATCC BAA-98 / CGA009) protein is 4-hydroxy-3-methylbut-2-en-1-yl diphosphate synthase (flavodoxin).